We begin with the raw amino-acid sequence, 84 residues long: Toxin To7 (84 aa).

An N-terminal signal peptide occupies residues 1–20 (MSIFPIVLALLLIGLEETEA). An LCN-type CS-alpha/beta domain is found at 21–83 (LDGYPLSKIN…KMYPGSSPCY (63 aa)). 4 cysteine pairs are disulfide-bonded: Cys-32-Cys-82, Cys-36-Cys-59, Cys-42-Cys-64, and Cys-46-Cys-66.

Expressed by the venom gland.

The protein resides in the secreted. Functionally, inhibits voltage-gated sodium channels (Nav). This is Toxin To7 from Tityus obscurus (Amazonian scorpion).